The sequence spans 94 residues: MLKPLGDRVVIEVLEAEEKTASGIVLPDSAKEKPQSGKIVAVGSGRVLENGTKEPLEVAEGDTVIFAKYSGTEVTYEGTDYLILRESDILAITK.

This sequence belongs to the GroES chaperonin family. Heptamer of 7 subunits arranged in a ring. Interacts with the chaperonin GroEL.

It localises to the cytoplasm. Functionally, together with the chaperonin GroEL, plays an essential role in assisting protein folding. The GroEL-GroES system forms a nano-cage that allows encapsulation of the non-native substrate proteins and provides a physical environment optimized to promote and accelerate protein folding. GroES binds to the apical surface of the GroEL ring, thereby capping the opening of the GroEL channel. This is Co-chaperonin GroES from Listeria welshimeri serovar 6b (strain ATCC 35897 / DSM 20650 / CCUG 15529 / CIP 8149 / NCTC 11857 / SLCC 5334 / V8).